The following is a 315-amino-acid chain: DNA-directed RNA polymerase subunit alpha (315 aa).

Positions 1–228 are alpha N-terminal domain (alpha-NTD); that stretch reads MLEIEKPIIE…EHFKLFMSLT (228 aa). An alpha C-terminal domain (alpha-CTD) region spans residues 245 to 315; the sequence is KEKVLEMTVE…LGLALKLTEE (71 aa).

The protein belongs to the RNA polymerase alpha chain family. Homodimer. The RNAP catalytic core consists of 2 alpha, 1 beta, 1 beta' and 1 omega subunit. When a sigma factor is associated with the core the holoenzyme is formed, which can initiate transcription.

The catalysed reaction is RNA(n) + a ribonucleoside 5'-triphosphate = RNA(n+1) + diphosphate. DNA-dependent RNA polymerase catalyzes the transcription of DNA into RNA using the four ribonucleoside triphosphates as substrates. This is DNA-directed RNA polymerase subunit alpha from Clostridium beijerinckii (strain ATCC 51743 / NCIMB 8052) (Clostridium acetobutylicum).